The following is a 330-amino-acid chain: D-alanine--D-alanine ligase (330 aa).

An ATP-grasp domain is found at 122–323 (NRFLSGFGIR…MKEVLCTIIR (202 aa)). 151-206 (TARMGLPLFVKPNVGGSSIATTKVVEAAQLLPAIGQAFSEGEEVMIERLICGTEVT) is a binding site for ATP. Mg(2+) is bound by residues aspartate 277, glutamate 290, and asparagine 292.

Belongs to the D-alanine--D-alanine ligase family. Requires Mg(2+) as cofactor. It depends on Mn(2+) as a cofactor.

The protein localises to the cytoplasm. The catalysed reaction is 2 D-alanine + ATP = D-alanyl-D-alanine + ADP + phosphate + H(+). The protein operates within cell wall biogenesis; peptidoglycan biosynthesis. In terms of biological role, cell wall formation. The polypeptide is D-alanine--D-alanine ligase (Porphyromonas gingivalis (strain ATCC 33277 / DSM 20709 / CIP 103683 / JCM 12257 / NCTC 11834 / 2561)).